Consider the following 32-residue polypeptide: Natriuretic peptide Coa_NP1 (32 aa).

Cys-8 and Cys-24 are oxidised to a cystine.

This sequence belongs to the natriuretic peptide family. Snake NP subfamily. In terms of tissue distribution, expressed by the venom gland.

Its subcellular location is the secreted. Snake venom natriuretic peptide that exhibits hypotensive and vasodepressor activity in rats. The polypeptide is Natriuretic peptide Coa_NP1 (Crotalus lutosus abyssus (Grand Canyon rattlesnake)).